A 957-amino-acid chain; its full sequence is Glycine dehydrogenase (decarboxylating) (957 aa).

K708 is subject to N6-(pyridoxal phosphate)lysine.

The protein belongs to the GcvP family. In terms of assembly, the glycine cleavage system is composed of four proteins: P, T, L and H. Pyridoxal 5'-phosphate is required as a cofactor.

It carries out the reaction N(6)-[(R)-lipoyl]-L-lysyl-[glycine-cleavage complex H protein] + glycine + H(+) = N(6)-[(R)-S(8)-aminomethyldihydrolipoyl]-L-lysyl-[glycine-cleavage complex H protein] + CO2. In terms of biological role, the glycine cleavage system catalyzes the degradation of glycine. The P protein binds the alpha-amino group of glycine through its pyridoxal phosphate cofactor; CO(2) is released and the remaining methylamine moiety is then transferred to the lipoamide cofactor of the H protein. The protein is Glycine dehydrogenase (decarboxylating) of Pectobacterium atrosepticum (strain SCRI 1043 / ATCC BAA-672) (Erwinia carotovora subsp. atroseptica).